Consider the following 232-residue polypeptide: MTIDLAKVKIEDSWKEVLKDEFLSSYFLEIKFNLINALKNGKVYPPSNLIFNAFNLTPFDKVKVVILGQDPYHNEGEAMGLSFSVPKGVRVPPSLANIYKEIKDDLGIIEPNCGDLSYWAKQGVLLLNATLSVGARMANSHSNFGWQIFSDAVIKNISEKKTGVVFMLWGNYARAKANLIEANKHLVLTAAHPSPLARGAFFGSRHFSKCNNYLIKNGQTPIDWDLNNYTLN.

The Proton acceptor role is filled by D70.

Belongs to the uracil-DNA glycosylase (UDG) superfamily. UNG family.

It localises to the cytoplasm. The catalysed reaction is Hydrolyzes single-stranded DNA or mismatched double-stranded DNA and polynucleotides, releasing free uracil.. Its function is as follows. Excises uracil residues from the DNA which can arise as a result of misincorporation of dUMP residues by DNA polymerase or due to deamination of cytosine. The sequence is that of Uracil-DNA glycosylase from Campylobacter fetus subsp. fetus (strain 82-40).